The chain runs to 491 residues: 1-aminocyclopropane-1-carboxylate synthase (491 aa).

Lysine 278 is subject to N6-(pyridoxal phosphate)lysine.

It belongs to the class-I pyridoxal-phosphate-dependent aminotransferase family. Homodimer. It depends on pyridoxal 5'-phosphate as a cofactor.

It catalyses the reaction S-adenosyl-L-methionine = 1-aminocyclopropane-1-carboxylate + S-methyl-5'-thioadenosine + H(+). The protein operates within alkene biosynthesis; ethylene biosynthesis via S-adenosyl-L-methionine; ethylene from S-adenosyl-L-methionine: step 1/2. In terms of biological role, catalyzes the formation of 1-aminocyclopropane-1-carboxylate, a direct precursor of ethylene in higher plants. This chain is 1-aminocyclopropane-1-carboxylate synthase (ACS1), found in Nicotiana tabacum (Common tobacco).